Consider the following 554-residue polypeptide: CTP synthase (554 aa).

Residues 1 to 265 (MTPLIFVTGG…DELVIEQFKL (265 aa)) form an amidoligase domain region. Serine 13 contributes to the CTP binding site. Serine 13 contributes to the UTP binding site. Residues 14–19 (SLGKGI) and aspartate 71 each bind ATP. Mg(2+) is bound by residues aspartate 71 and glutamate 139. CTP contacts are provided by residues 146–148 (DIE), 186–191 (KTKPTQ), and lysine 222. UTP is bound by residues 186–191 (KTKPTQ) and lysine 222. The Glutamine amidotransferase type-1 domain maps to 292 to 545 (NIAVVGKYVD…VRAAREKKAG (254 aa)). Glycine 353 lines the L-glutamine pocket. Residue cysteine 380 is the Nucleophile; for glutamine hydrolysis of the active site. L-glutamine-binding positions include 381-384 (YGMQ), glutamate 404, and arginine 471. Residues histidine 518 and glutamate 520 contribute to the active site.

This sequence belongs to the CTP synthase family. Homotetramer.

The catalysed reaction is UTP + L-glutamine + ATP + H2O = CTP + L-glutamate + ADP + phosphate + 2 H(+). It carries out the reaction L-glutamine + H2O = L-glutamate + NH4(+). The enzyme catalyses UTP + NH4(+) + ATP = CTP + ADP + phosphate + 2 H(+). It participates in pyrimidine metabolism; CTP biosynthesis via de novo pathway; CTP from UDP: step 2/2. Allosterically activated by GTP, when glutamine is the substrate; GTP has no effect on the reaction when ammonia is the substrate. The allosteric effector GTP functions by stabilizing the protein conformation that binds the tetrahedral intermediate(s) formed during glutamine hydrolysis. Inhibited by the product CTP, via allosteric rather than competitive inhibition. Functionally, catalyzes the ATP-dependent amination of UTP to CTP with either L-glutamine or ammonia as the source of nitrogen. Regulates intracellular CTP levels through interactions with the four ribonucleotide triphosphates. This Xanthomonas euvesicatoria pv. vesicatoria (strain 85-10) (Xanthomonas campestris pv. vesicatoria) protein is CTP synthase.